Consider the following 246-residue polypeptide: 3-deoxy-manno-octulosonate cytidylyltransferase (246 aa).

The protein belongs to the KdsB family. As to quaternary structure, homodimer.

It localises to the cytoplasm. It carries out the reaction 3-deoxy-alpha-D-manno-oct-2-ulosonate + CTP = CMP-3-deoxy-beta-D-manno-octulosonate + diphosphate. It participates in nucleotide-sugar biosynthesis; CMP-3-deoxy-D-manno-octulosonate biosynthesis; CMP-3-deoxy-D-manno-octulosonate from 3-deoxy-D-manno-octulosonate and CTP: step 1/1. Its pathway is bacterial outer membrane biogenesis; lipopolysaccharide biosynthesis. Functionally, activates KDO (a required 8-carbon sugar) for incorporation into bacterial lipopolysaccharide in Gram-negative bacteria. The protein is 3-deoxy-manno-octulosonate cytidylyltransferase (kpsU) of Escherichia coli.